Consider the following 418-residue polypeptide: Putative ion-transport protein YfeO (418 aa).

Transmembrane regions (helical) follow at residues 9–31, 55–77, 90–112, 122–140, 147–169, 189–211, 223–244, 259–281, 301–323, 343–363, and 376–398; these read MLLLSLPAVAIGIASSLILIMVM, SPLWIIGVLTLTGIAVGLVIRFS, LIGAPIPPSALPGLIVALILGLA, PIITVNIALAVAIGARLLP, WTILASAGTIGALFGTPVAAALI, PLMAAAAGALTTGLFFHPHFSLP, ILSGAIVAAIAIAAGMVAVWCL, FVLGIGGFILGILGVIGGPVSLF, YFLLAVIKLAALVVAAASGFRGG, VPAVPAAITVSCAILGIVLVV, and VVVPNTTLLPLLCIVMLPAWLLL.

The protein belongs to the chloride channel (TC 2.A.49) family.

It localises to the cell membrane. This Escherichia coli O6:H1 (strain CFT073 / ATCC 700928 / UPEC) protein is Putative ion-transport protein YfeO (yfeO).